Reading from the N-terminus, the 233-residue chain is Aquaglyceroporin AqpS (233 aa).

2 helical membrane passes run 11 to 31 and 40 to 60; these read VAEA…GIMA and LALV…VTIL. An NPA 1 motif is present at residues 69–71; it reads NPA. The next 3 membrane-spanning stretches (helical) occupy residues 89 to 109, 125 to 145, and 152 to 172; these read AYVI…HLMF, AQWL…LAGI, and VPWL…STSF. Positions 174-176 match the NPA 2 motif; sequence NPA. A helical membrane pass occupies residues 193–213; the sequence is GDLPGFVIAELLGAVCALALM.

This sequence belongs to the MIP/aquaporin (TC 1.A.8) family. NIP (TC 1.A.8.12) subfamily.

It is found in the cell inner membrane. Its function is as follows. Involved in resistance to arsenic. Facilitates efflux of arsenite [As(III)]. Arsenate [As(V)] enters the cell through phosphate transport systems and is reduced to arsenite by the arsenate reductase ArsC. Internally generated arsenite flows out of the cell by downhill movement through AqpS. Can also transport the highly toxic methylarsenite [MAs(III)] and the relatively non-toxic methylarsenate [MAs(V)]. May be a component of an methylarsenite resistance pathway in which methylarsenite enters cells via AqpS, is oxidized by ArsH to methylarsenate, which exits the cells via AqpS. This pathway may confer a selective advantage for R.melliloti to grow in the presence of environmental methylarsenicals. This chain is Aquaglyceroporin AqpS, found in Rhizobium meliloti (strain 1021) (Ensifer meliloti).